Here is a 507-residue protein sequence, read N- to C-terminus: Probable aldehyde dehydrogenase (507 aa).

219-225 provides a ligand contact to NAD(+); sequence GFGAEAG. Active-site residues include Glu263 and Cys302.

It belongs to the aldehyde dehydrogenase family.

The catalysed reaction is an aldehyde + NAD(+) + H2O = a carboxylate + NADH + 2 H(+). This Mycobacterium bovis (strain ATCC BAA-935 / AF2122/97) protein is Probable aldehyde dehydrogenase.